A 546-amino-acid chain; its full sequence is Coatomer subunit delta (546 aa).

Positions N190–Q440 are interaction with DSL1. The tract at residues P236–E287 is disordered. Residues R260 to G276 show a composition bias toward low complexity. T277 carries the phosphothreonine modification. In terms of domain architecture, MHD spans N288 to Q546.

The protein belongs to the adaptor complexes medium subunit family. Delta-COP subfamily. Oligomeric complex that consists of at least the alpha, beta, beta', gamma, delta, epsilon and zeta subunits. Interacts with DSL1.

Its subcellular location is the cytoplasm. It is found in the golgi apparatus membrane. It localises to the cytoplasmic vesicle. The protein localises to the COPI-coated vesicle membrane. In terms of biological role, the coatomer is a cytosolic protein complex that binds to dilysine motifs and reversibly associates with Golgi non-clathrin-coated vesicles, which further mediate biosynthetic protein transport from the ER, via the Golgi up to the trans Golgi network. Coatomer complex is required for budding from Golgi membranes, and is essential for the retrograde Golgi-to-ER transport of dilysine-tagged proteins. In Saccharomyces cerevisiae (strain ATCC 204508 / S288c) (Baker's yeast), this protein is Coatomer subunit delta (RET2).